Here is a 510-residue protein sequence, read N- to C-terminus: NAD(P)H-quinone oxidoreductase subunit 2 B, chloroplastic (510 aa).

Transmembrane regions (helical) follow at residues leucine 24–leucine 44, tryptophan 59–tryptophan 79, isoleucine 99–isoleucine 119, methionine 124–cysteine 144, leucine 149–tyrosine 169, leucine 184–leucine 204, isoleucine 229–phenylalanine 249, proline 261–threonine 281, tryptophan 295–isoleucine 315, methionine 323–aspartate 343, tyrosine 354–leucine 374, alanine 395–phenylalanine 415, leucine 418–leucine 438, and methionine 484–isoleucine 504.

This sequence belongs to the complex I subunit 2 family. NDH is composed of at least 16 different subunits, 5 of which are encoded in the nucleus.

The protein resides in the plastid. It localises to the chloroplast thylakoid membrane. It catalyses the reaction a plastoquinone + NADH + (n+1) H(+)(in) = a plastoquinol + NAD(+) + n H(+)(out). The catalysed reaction is a plastoquinone + NADPH + (n+1) H(+)(in) = a plastoquinol + NADP(+) + n H(+)(out). NDH shuttles electrons from NAD(P)H:plastoquinone, via FMN and iron-sulfur (Fe-S) centers, to quinones in the photosynthetic chain and possibly in a chloroplast respiratory chain. The immediate electron acceptor for the enzyme in this species is believed to be plastoquinone. Couples the redox reaction to proton translocation, and thus conserves the redox energy in a proton gradient. This Zea mays (Maize) protein is NAD(P)H-quinone oxidoreductase subunit 2 B, chloroplastic.